The sequence spans 73 residues: MLIKPAKRSEKIYTIIAIKDSVVTLKNDYQDEKNIQIYEFDLQNIIPEVGKFINLIKYDQQGCSVFEEYDKNI.

This is an uncharacterized protein from Ureaplasma parvum serovar 3 (strain ATCC 700970).